We begin with the raw amino-acid sequence, 500 residues long: Cytochrome P450 71B22 (500 aa).

A helical membrane pass occupies residues methionine 1–leucine 21. Position 441 (cysteine 441) interacts with heme.

Belongs to the cytochrome P450 family. The cofactor is heme.

Its subcellular location is the membrane. This Arabidopsis thaliana (Mouse-ear cress) protein is Cytochrome P450 71B22 (CYP71B22).